Here is a 349-residue protein sequence, read N- to C-terminus: MIVNRYKDAGVDVNAGYELVRRIKGAVASTKRPGYVGNIGGFGGLFDLDSLGYDHPVLVSGTDGVGTKLIIAQKMDKNDTVGIDVVAMCVNDVLAQGAEPLFFLDYIACGHNDPALLASVVQGVAEGCKQAGASLIGGETAEMPDMYAPDEYDLAGFTVGVAEKDRLLSVDTPQAGDVLLGLASSGVHSNGFSLVRKILFKDHDVKLTDKPAELKGKSVGESLLAPTRIYIKSVLPLIKQGLVHGVAHITGGGLIENVPRMFNDGLRAEIAAGSWEVPDIFNYLKQVGNLSDDDCWQTFNMGLGMILAVPADKKEEAKQLLLASGEKVFEVGHLSERTDGEKIFIKLVE.

Belongs to the AIR synthase family.

The protein localises to the cytoplasm. The enzyme catalyses 2-formamido-N(1)-(5-O-phospho-beta-D-ribosyl)acetamidine + ATP = 5-amino-1-(5-phospho-beta-D-ribosyl)imidazole + ADP + phosphate + H(+). It functions in the pathway purine metabolism; IMP biosynthesis via de novo pathway; 5-amino-1-(5-phospho-D-ribosyl)imidazole from N(2)-formyl-N(1)-(5-phospho-D-ribosyl)glycinamide: step 2/2. In Lactobacillus delbrueckii subsp. bulgaricus (strain ATCC BAA-365 / Lb-18), this protein is Phosphoribosylformylglycinamidine cyclo-ligase.